Reading from the N-terminus, the 190-residue chain is Elongation factor P-like protein (190 aa).

It belongs to the elongation factor P family.

This Escherichia fergusonii (strain ATCC 35469 / DSM 13698 / CCUG 18766 / IAM 14443 / JCM 21226 / LMG 7866 / NBRC 102419 / NCTC 12128 / CDC 0568-73) protein is Elongation factor P-like protein.